Here is a 21-residue protein sequence, read N- to C-terminus: Hemocyanin subunit 6 (21 aa).

Belongs to the tyrosinase family. Hemocyanin subfamily. Hemolymph.

It is found in the secreted. The protein localises to the extracellular space. Its function is as follows. Hemocyanins are copper-containing oxygen carriers occurring freely dissolved in the hemolymph of many mollusks and arthropods. The polypeptide is Hemocyanin subunit 6 (Maja squinado (Mediterranean spider crab)).